The sequence spans 228 residues: UPF0173 metal-dependent hydrolase BcerKBAB4_4442 (228 aa).

The protein belongs to the UPF0173 family.

This chain is UPF0173 metal-dependent hydrolase BcerKBAB4_4442, found in Bacillus mycoides (strain KBAB4) (Bacillus weihenstephanensis).